The chain runs to 498 residues: NADH-quinone oxidoreductase subunit N (498 aa).

Transmembrane regions (helical) follow at residues 10–30 (LMPL…MLLI), 44–64 (VVGL…GKFV), 68–88 (VMGM…ILVA), 109–129 (ELYL…ASSH), 130–150 (YASF…LLAY), 164–184 (YLVL…YIYA), 207–227 (VLLG…LAPF), 239–259 (PAPM…GLFV), 273–293 (LVTV…LLAV), 301–321 (ILGY…ISMT), 328–348 (VTVY…AVAL), 377–397 (ATLT…GFIG), 412–434 (FLAA…VMVV), and 458–478 (LMVL…DPMI).

The protein belongs to the complex I subunit 2 family. As to quaternary structure, NDH-1 is composed of 14 different subunits. Subunits NuoA, H, J, K, L, M, N constitute the membrane sector of the complex.

It is found in the cell inner membrane. It carries out the reaction a quinone + NADH + 5 H(+)(in) = a quinol + NAD(+) + 4 H(+)(out). Its function is as follows. NDH-1 shuttles electrons from NADH, via FMN and iron-sulfur (Fe-S) centers, to quinones in the respiratory chain. The immediate electron acceptor for the enzyme in this species is believed to be ubiquinone. Couples the redox reaction to proton translocation (for every two electrons transferred, four hydrogen ions are translocated across the cytoplasmic membrane), and thus conserves the redox energy in a proton gradient. This chain is NADH-quinone oxidoreductase subunit N, found in Acinetobacter baumannii (strain AB0057).